The sequence spans 610 residues: UvrABC system protein C (610 aa).

The region spanning 16-94 (SQPGVYRMYD…IKLYQPRYNV (79 aa)) is the GIY-YIG domain. Residues 204 to 239 (DQVLTQLIARMEKASQDLAFEEAARIRDQIQAVRRV) form the UVR domain.

The protein belongs to the UvrC family. Interacts with UvrB in an incision complex.

The protein localises to the cytoplasm. The UvrABC repair system catalyzes the recognition and processing of DNA lesions. UvrC both incises the 5' and 3' sides of the lesion. The N-terminal half is responsible for the 3' incision and the C-terminal half is responsible for the 5' incision. This chain is UvrABC system protein C, found in Salmonella agona (strain SL483).